The primary structure comprises 659 residues: UvrABC system protein B (659 aa).

The Helicase ATP-binding domain occupies Gln25–Arg412. An ATP-binding site is contributed by Gly38–Thr45. Positions Tyr91 to Ile114 match the Beta-hairpin motif. Positions Gln429 to Ile582 constitute a Helicase C-terminal domain. Positions Glu622 to Asn657 constitute a UVR domain.

This sequence belongs to the UvrB family. Forms a heterotetramer with UvrA during the search for lesions. Interacts with UvrC in an incision complex.

It is found in the cytoplasm. Its function is as follows. The UvrABC repair system catalyzes the recognition and processing of DNA lesions. A damage recognition complex composed of 2 UvrA and 2 UvrB subunits scans DNA for abnormalities. Upon binding of the UvrA(2)B(2) complex to a putative damaged site, the DNA wraps around one UvrB monomer. DNA wrap is dependent on ATP binding by UvrB and probably causes local melting of the DNA helix, facilitating insertion of UvrB beta-hairpin between the DNA strands. Then UvrB probes one DNA strand for the presence of a lesion. If a lesion is found the UvrA subunits dissociate and the UvrB-DNA preincision complex is formed. This complex is subsequently bound by UvrC and the second UvrB is released. If no lesion is found, the DNA wraps around the other UvrB subunit that will check the other stand for damage. This is UvrABC system protein B from Clostridium perfringens (strain 13 / Type A).